The chain runs to 510 residues: Lysine--tRNA ligase (510 aa).

Mg(2+) is bound by residues glutamate 420 and glutamate 427.

Belongs to the class-II aminoacyl-tRNA synthetase family. In terms of assembly, homodimer. It depends on Mg(2+) as a cofactor.

The protein resides in the cytoplasm. It catalyses the reaction tRNA(Lys) + L-lysine + ATP = L-lysyl-tRNA(Lys) + AMP + diphosphate. This is Lysine--tRNA ligase from Vibrio vulnificus (strain YJ016).